The chain runs to 147 residues: Fibromodulin (147 aa).

LRR repeat units lie at residues 1–15 (LDHNNLTRMPGPLPR), 16–37 (SLRELHLDHNQISRVPNNALEG), 40–61 (NLTALYLQHNEIQEVGSSMRGL), 63–84 (SLILLDLSYNHLRRVPDGLPSA), 85–105 (LEQLYLEHNNVYTVPDSYFRG), and 108–128 (KLLYVRLSHNSLTNSGLASNT). Asn5 carries an N-linked (GlcNAc...) asparagine glycan. Asn40 carries an N-linked (GlcNAc...) asparagine glycan. The N-linked (GlcNAc...) asparagine glycan is linked to Asn130. An LRR 7 repeat occupies 133 to 147 (SLLELDLSYNQLQKI).

The protein belongs to the small leucine-rich proteoglycan (SLRP) family. SLRP class II subfamily. In terms of assembly, binds to type I and type II collagen. Binds keratan sulfate chains. In terms of processing, sulfated on tyrosine residues. Post-translationally, the N-terminus is blocked by a pyrrolidone carboxylic acid generated by post-translational modification of N-terminal glutamine.

The protein resides in the secreted. It localises to the extracellular space. It is found in the extracellular matrix. Its function is as follows. Affects the rate of fibrils formation. May have a primary role in collagen fibrillogenesis. In Oryctolagus cuniculus (Rabbit), this protein is Fibromodulin (FMOD).